Consider the following 334-residue polypeptide: S-adenosylmethionine:tRNA ribosyltransferase-isomerase (334 aa).

Belongs to the QueA family. In terms of assembly, monomer.

It localises to the cytoplasm. The catalysed reaction is 7-aminomethyl-7-carbaguanosine(34) in tRNA + S-adenosyl-L-methionine = epoxyqueuosine(34) in tRNA + adenine + L-methionine + 2 H(+). The protein operates within tRNA modification; tRNA-queuosine biosynthesis. Its function is as follows. Transfers and isomerizes the ribose moiety from AdoMet to the 7-aminomethyl group of 7-deazaguanine (preQ1-tRNA) to give epoxyqueuosine (oQ-tRNA). This is S-adenosylmethionine:tRNA ribosyltransferase-isomerase from Rubrobacter xylanophilus (strain DSM 9941 / JCM 11954 / NBRC 16129 / PRD-1).